The primary structure comprises 142 residues: Large ribosomal subunit protein uL13 (142 aa).

Belongs to the universal ribosomal protein uL13 family. Part of the 50S ribosomal subunit.

Its function is as follows. This protein is one of the early assembly proteins of the 50S ribosomal subunit, although it is not seen to bind rRNA by itself. It is important during the early stages of 50S assembly. The protein is Large ribosomal subunit protein uL13 of Francisella tularensis subsp. holarctica (strain FTNF002-00 / FTA).